The following is a 1079-amino-acid chain: Carbamoyl phosphate synthase large chain (1079 aa).

The tract at residues 2-403 (PKSTDIKSIL…SIQKAIRGLE (402 aa)) is carboxyphosphate synthetic domain. R129, R169, G175, G176, E208, L210, E215, G241, I242, H243, Q285, and E299 together coordinate ATP. Residues 133 to 328 (EHSMKKLNLE…IAKIAAKLAI (196 aa)) enclose the ATP-grasp 1 domain. Mg(2+) contacts are provided by Q285, E299, and N301. Mn(2+) is bound by residues Q285, E299, and N301. The interval 404–553 (VGASGFDSKI…YSTWEDECES (150 aa)) is oligomerization domain. Residues 554–936 (HPSKNNKKII…AFSKSMLGAH (383 aa)) are carbamoyl phosphate synthetic domain. Positions 679 to 870 (QKTVNKLRLQ…LAKISVRVMC (192 aa)) constitute an ATP-grasp 2 domain. R715, Q754, L756, E761, G786, V787, H788, S789, Q829, and E841 together coordinate ATP. Residues Q829, E841, and N843 each contribute to the Mg(2+) site. Mn(2+) contacts are provided by Q829, E841, and N843. In terms of domain architecture, MGS-like spans 937-1079 (TNMKKSGRVL…KKIQLFYTKK (143 aa)). Residues 937-1079 (TNMKKSGRVL…KKIQLFYTKK (143 aa)) form an allosteric domain region.

This sequence belongs to the CarB family. As to quaternary structure, composed of two chains; the small (or glutamine) chain promotes the hydrolysis of glutamine to ammonia, which is used by the large (or ammonia) chain to synthesize carbamoyl phosphate. Tetramer of heterodimers (alpha,beta)4. Mg(2+) serves as cofactor. Mn(2+) is required as a cofactor.

The catalysed reaction is hydrogencarbonate + L-glutamine + 2 ATP + H2O = carbamoyl phosphate + L-glutamate + 2 ADP + phosphate + 2 H(+). The enzyme catalyses hydrogencarbonate + NH4(+) + 2 ATP = carbamoyl phosphate + 2 ADP + phosphate + 2 H(+). It functions in the pathway amino-acid biosynthesis; L-arginine biosynthesis; carbamoyl phosphate from bicarbonate: step 1/1. Its pathway is pyrimidine metabolism; UMP biosynthesis via de novo pathway; (S)-dihydroorotate from bicarbonate: step 1/3. Functionally, large subunit of the glutamine-dependent carbamoyl phosphate synthetase (CPSase). CPSase catalyzes the formation of carbamoyl phosphate from the ammonia moiety of glutamine, carbonate, and phosphate donated by ATP, constituting the first step of 2 biosynthetic pathways, one leading to arginine and/or urea and the other to pyrimidine nucleotides. The large subunit (synthetase) binds the substrates ammonia (free or transferred from glutamine from the small subunit), hydrogencarbonate and ATP and carries out an ATP-coupled ligase reaction, activating hydrogencarbonate by forming carboxy phosphate which reacts with ammonia to form carbamoyl phosphate. The chain is Carbamoyl phosphate synthase large chain from Buchnera aphidicola subsp. Acyrthosiphon pisum (strain APS) (Acyrthosiphon pisum symbiotic bacterium).